Reading from the N-terminus, the 379-residue chain is Methionine aminopeptidase 1 (379 aa).

Residues 7-60 (KHICCGIDCNNEADRLQCPKCLNDGVKSYFCGQECFRNSWNIHKHLHRPPNVEK) form a C6H2-type zinc finger. Positions 10, 15, 24, 27, 37, 41, 49, and 53 each coordinate Zn(2+). Histidine 192 provides a ligand contact to a protein. Positions 209, 220, and 289 each coordinate Zn(2+). Residue histidine 296 coordinates a protein. Zn(2+) is bound by residues glutamate 322 and glutamate 353. Serine 373 is subject to Phosphoserine.

Belongs to the peptidase M24A family. Methionine aminopeptidase type 1 subfamily. As to quaternary structure, associates with the 60S ribosomal subunit of the 80S translational complex. Zn(2+) serves as cofactor. Co(2+) is required as a cofactor. It depends on Mn(2+) as a cofactor. Requires Fe(2+) as cofactor.

The protein localises to the cytoplasm. The protein resides in the nucleus. It localises to the nucleolus. The catalysed reaction is Release of N-terminal amino acids, preferentially methionine, from peptides and arylamides.. In terms of biological role, cotranslationally removes the N-terminal methionine from nascent proteins. The N-terminal methionine is often cleaved when the second residue in the primary sequence is small and uncharged (Met-Ala-, Cys, Gly, Pro, Ser, Thr, or Val). This is Methionine aminopeptidase 1 (fma1) from Schizosaccharomyces pombe (strain 972 / ATCC 24843) (Fission yeast).